The sequence spans 424 residues: FeMo cofactor biosynthesis protein NifB (424 aa).

Residues 12-261 form the Radical SAM core domain; that stretch reads NDSSRHTYGR…PQMKHCARCR (250 aa). [4Fe-4S] cluster contacts are provided by Cys30, Cys34, and Cys37. Residues Gly84, Thr136, and Val188 each coordinate S-adenosyl-L-methionine. Residues Cys257 and Cys260 each coordinate [4Fe-4S] cluster.

The protein belongs to the radical SAM superfamily. NifB family. As to quaternary structure, monomer. [4Fe-4S] cluster serves as cofactor.

Its pathway is cofactor biosynthesis; Fe-Mo cofactor biosynthesis. Involved in the biosynthesis of the iron-molybdenum cofactor (FeMo-co or M-cluster) found in the dinitrogenase enzyme of the nitrogenase complex in nitrogen-fixing microorganisms. NifB catalyzes the crucial step of radical SAM-dependent carbide insertion that occurs concomitant with the insertion of a 9th sulfur and the rearrangement/coupling of two [4Fe-4S] clusters into a [8Fe-9S-C] cluster, the precursor to the M-cluster. The sequence is that of FeMo cofactor biosynthesis protein NifB from Chlorobaculum tepidum (strain ATCC 49652 / DSM 12025 / NBRC 103806 / TLS) (Chlorobium tepidum).